The chain runs to 134 residues: Putative pre-16S rRNA nuclease (134 aa).

It belongs to the YqgF nuclease family.

It localises to the cytoplasm. Could be a nuclease involved in processing of the 5'-end of pre-16S rRNA. In Helicobacter pylori (strain G27), this protein is Putative pre-16S rRNA nuclease.